Reading from the N-terminus, the 352-residue chain is C5a anaphylatoxin chemotactic receptor 1 (352 aa).

The span at 1–11 shows a compositional bias: polar residues; the sequence is MDPISNDSSEI. The interval 1 to 20 is disordered; it reads MDPISNDSSEITYDYSDGTP. Over 1–38 the chain is Extracellular; the sequence is MDPISNDSSEITYDYSDGTPNPDMPADGVYIPKMEPGD. N-linked (GlcNAc...) asparagine glycosylation is present at asparagine 6. Sulfotyrosine occurs at positions 13 and 15. Residues 39–65 traverse the membrane as a helical segment; it reads IAALIIYLAVFLVGVTGNALVVWVTAF. Residues 66–70 are Cytoplasmic-facing; it reads EAKRT. A helical membrane pass occupies residues 71 to 94; that stretch reads VNAIWFLNLAVADLLSCLALPILF. The Extracellular segment spans residues 95 to 111; it reads TSIVKHNHWPFGDQACI. The cysteines at positions 110 and 189 are disulfide-linked. Residues 112-133 traverse the membrane as a helical segment; sequence VLPSLILLNMYSSILLLATISA. The Cytoplasmic portion of the chain corresponds to 134 to 154; that stretch reads DRFLLVFKPIWCQKFRRPGLA. The chain crosses the membrane as a helical span at residues 155 to 175; sequence WMACGVTWVLALLLTIPSFVF. Topologically, residues 176-202 are extracellular; it reads RRIHKDPYSDSILCNIDYSKGPFFIEK. A helical membrane pass occupies residues 203–228; that stretch reads AIAILRLMVGFVLPLLTLNICYTFLL. The Cytoplasmic segment spans residues 229–244; that stretch reads IRTWSRKATRSTKTLK. The chain crosses the membrane as a helical span at residues 245–267; it reads VVMAVVTCFFVFWLPYQVTGVIL. The Extracellular portion of the chain corresponds to 268-284; it reads AWLPRSSSTFQSVERLN. Residues 285-305 traverse the membrane as a helical segment; the sequence is SLCVSLAYINCCVNPIIYVMA. The Cytoplasmic segment spans residues 306–352; that stretch reads GQGFHGRLRRSLPSIIRNVLSEDSLGRDSKSFTRSTMDTSTQKSQAV. Phosphoserine occurs at positions 316, 319, 326, 329, 334, 336, and 340. Residues 332-352 form a disordered region; that stretch reads RDSKSFTRSTMDTSTQKSQAV. A compositionally biased stretch (polar residues) spans 337 to 352; that stretch reads FTRSTMDTSTQKSQAV.

The protein belongs to the G-protein coupled receptor 1 family. As to quaternary structure, homodimer. May also form higher-order oligomers. Interacts (when phosphorylated) with ARRB1 and ARRB2; the interaction is associated with internalization of C5aR. In terms of processing, sulfation plays a critical role in the association of C5aR with C5a, but no significant role in the ability of the receptor to transduce a signal and mobilize calcium in response to a small peptide agonist. Phosphorylated on serine residues in response to C5a binding, resulting in internalization of the receptor and short-term desensitization to the ligand.

Its subcellular location is the cell membrane. The protein resides in the cytoplasmic vesicle. In terms of biological role, receptor for the chemotactic and inflammatory peptide anaphylatoxin C5a. The ligand interacts with at least two sites on the receptor: a high-affinity site on the extracellular N-terminus, and a second site in the transmembrane region which activates downstream signaling events. Receptor activation stimulates chemotaxis, granule enzyme release, intracellular calcium release and superoxide anion production. This chain is C5a anaphylatoxin chemotactic receptor 1 (C5ar1), found in Rattus norvegicus (Rat).